Reading from the N-terminus, the 152-residue chain is Deoxyuridine 5'-triphosphate nucleotidohydrolase (152 aa).

Residues 71-73 (RSG), N84, 88-90 (LID), and M98 contribute to the substrate site.

This sequence belongs to the dUTPase family. The cofactor is Mg(2+).

It carries out the reaction dUTP + H2O = dUMP + diphosphate + H(+). The protein operates within pyrimidine metabolism; dUMP biosynthesis; dUMP from dCTP (dUTP route): step 2/2. Functionally, this enzyme is involved in nucleotide metabolism: it produces dUMP, the immediate precursor of thymidine nucleotides and it decreases the intracellular concentration of dUTP so that uracil cannot be incorporated into DNA. This chain is Deoxyuridine 5'-triphosphate nucleotidohydrolase, found in Shewanella sp. (strain ANA-3).